The chain runs to 883 residues: Histidine--tRNA ligase, cytoplasmic (883 aa).

Belongs to the class-II aminoacyl-tRNA synthetase family.

It is found in the cytoplasm. It localises to the cytosol. It carries out the reaction tRNA(His) + L-histidine + ATP = L-histidyl-tRNA(His) + AMP + diphosphate + H(+). This is Histidine--tRNA ligase, cytoplasmic from Arabidopsis thaliana (Mouse-ear cress).